A 159-amino-acid chain; its full sequence is Transcription elongation factor GreA (159 aa).

It belongs to the GreA/GreB family.

Its function is as follows. Necessary for efficient RNA polymerase transcription elongation past template-encoded arresting sites. The arresting sites in DNA have the property of trapping a certain fraction of elongating RNA polymerases that pass through, resulting in locked ternary complexes. Cleavage of the nascent transcript by cleavage factors such as GreA or GreB allows the resumption of elongation from the new 3'terminus. GreA releases sequences of 2 to 3 nucleotides. In Psychromonas ingrahamii (strain DSM 17664 / CCUG 51855 / 37), this protein is Transcription elongation factor GreA.